The chain runs to 513 residues: Activin receptor type-2A (513 aa).

Positions 1-19 (MGAAAKLAFAVFLISCSSG) are cleaved as a signal peptide. Residues 20–135 (AILGRSETQE…TSNPVTPKPP (116 aa)) lie on the Extracellular side of the membrane. 5 disulfide bridges follow: Cys-30/Cys-60, Cys-50/Cys-78, Cys-85/Cys-104, Cys-91/Cys-103, and Cys-105/Cys-110. N-linked (GlcNAc...) asparagine glycosylation is found at Asn-43 and Asn-66. A helical transmembrane segment spans residues 136–161 (YYNILLYSLVPLMLIAGIVICAFWVY). Topologically, residues 162-513 (RHHKMAYPPV…VDFPPKESSL (352 aa)) are cytoplasmic. Residues 192–485 (LQLLEVKARG…GERITQMQRL (294 aa)) enclose the Protein kinase domain. ATP-binding positions include 198-206 (KARGRFGCV) and Lys-219. The active-site Proton acceptor is the Asp-322.

The protein belongs to the protein kinase superfamily. TKL Ser/Thr protein kinase family. TGFB receptor subfamily. In terms of assembly, part of a complex consisting of MAGI2/ARIP1, ACVR2A, ACVR1B and SMAD3. Interacts with MAGI2/ARIP1. Interacts with type I receptor ACVR1. Interacts with BMP7. Interacts with TSC22D1/TSC-22. Interacts with activin A/INHBA. It depends on Mg(2+) as a cofactor. The cofactor is Mn(2+). As to expression, brain, testis, intestine, liver and kidney.

It localises to the cell membrane. It carries out the reaction L-threonyl-[receptor-protein] + ATP = O-phospho-L-threonyl-[receptor-protein] + ADP + H(+). The catalysed reaction is L-seryl-[receptor-protein] + ATP = O-phospho-L-seryl-[receptor-protein] + ADP + H(+). Its function is as follows. On ligand binding, forms a receptor complex consisting of two type II and two type I transmembrane serine/threonine kinases. Type II receptors phosphorylate and activate type I receptors which autophosphorylate, then bind and activate SMAD transcriptional regulators. Receptor for activin A, activin B and inhibin A. Mediates induction of adipogenesis by GDF6. The protein is Activin receptor type-2A of Mus musculus (Mouse).